We begin with the raw amino-acid sequence, 483 residues long: L-2-hydroxyglutarate dehydrogenase, mitochondrial (483 aa).

The transit peptide at 1–67 (MKHKPETAAF…VDASKTIVRG (67 aa)) directs the protein to the mitochondrion.

Belongs to the L2HGDH family. Requires FAD as cofactor.

It localises to the mitochondrion. It catalyses the reaction (S)-2-hydroxyglutarate + A = 2-oxoglutarate + AH2. Catalyzes the oxidation of (S)-2-hydroxyglutarate to 2-oxoglutarate. Is specific for the (S) enantiomer and possesses very poor activity toward (R)-2-hydroxyglutarate. Has no activity toward related 2-hydroxy acids, such as glycolate, L-lactate or D-lactate. The polypeptide is L-2-hydroxyglutarate dehydrogenase, mitochondrial (Arabidopsis thaliana (Mouse-ear cress)).